A 389-amino-acid chain; its full sequence is Chitin-binding protein CbpD (389 aa).

The N-terminal stretch at 1-25 is a signal peptide; sequence MKHYSATLALLPLTLALFLPQAAHA. Residues 26–208 form the Chitin-binding type-4 domain; it reads HGSMETPPSR…EAFYACIDVS (183 aa). Residue tyrosine 37 is modified to Phosphotyrosine. Serine 210 carries the phosphoserine modification.

Its subcellular location is the secreted. Binds but does not hydrolyze chitin. This Pseudomonas aeruginosa (strain UCBPP-PA14) protein is Chitin-binding protein CbpD (cpbD).